The primary structure comprises 242 residues: Glucosamine-6-phosphate deaminase (242 aa).

The active-site Proton acceptor; for enolization step is aspartate 67. Residue asparagine 136 is the For ring-opening step of the active site. Histidine 138 acts as the Proton acceptor; for ring-opening step in catalysis. Glutamate 143 acts as the For ring-opening step in catalysis.

It belongs to the glucosamine/galactosamine-6-phosphate isomerase family. NagB subfamily.

The enzyme catalyses alpha-D-glucosamine 6-phosphate + H2O = beta-D-fructose 6-phosphate + NH4(+). It functions in the pathway amino-sugar metabolism; N-acetylneuraminate degradation; D-fructose 6-phosphate from N-acetylneuraminate: step 5/5. In terms of biological role, catalyzes the reversible isomerization-deamination of glucosamine 6-phosphate (GlcN6P) to form fructose 6-phosphate (Fru6P) and ammonium ion. The protein is Glucosamine-6-phosphate deaminase of Clostridium perfringens (strain 13 / Type A).